The primary structure comprises 672 residues: DNA ligase (672 aa).

NAD(+) is bound by residues 32 to 36, 82 to 83, and E113; these read DEKYD and SL. Residue K115 is the N6-AMP-lysine intermediate of the active site. NAD(+) contacts are provided by R136, E173, K290, and K314. Residues C408, C411, C427, and C433 each coordinate Zn(2+). The BRCT domain occupies 592–672; it reads DNNNTLFRKK…EFLNIINVYL (81 aa).

The protein belongs to the NAD-dependent DNA ligase family. LigA subfamily. The cofactor is Mg(2+). It depends on Mn(2+) as a cofactor.

It carries out the reaction NAD(+) + (deoxyribonucleotide)n-3'-hydroxyl + 5'-phospho-(deoxyribonucleotide)m = (deoxyribonucleotide)n+m + AMP + beta-nicotinamide D-nucleotide.. DNA ligase that catalyzes the formation of phosphodiester linkages between 5'-phosphoryl and 3'-hydroxyl groups in double-stranded DNA using NAD as a coenzyme and as the energy source for the reaction. It is essential for DNA replication and repair of damaged DNA. This chain is DNA ligase, found in Buchnera aphidicola subsp. Baizongia pistaciae (strain Bp).